A 72-amino-acid chain; its full sequence is Large ribosomal subunit protein uL29 (72 aa).

Belongs to the universal ribosomal protein uL29 family.

The chain is Large ribosomal subunit protein uL29 from Chlamydia abortus (strain DSM 27085 / S26/3) (Chlamydophila abortus).